Reading from the N-terminus, the 86-residue chain is Small ribosomal subunit protein bS20 (86 aa).

Residues 1-11 are compositionally biased toward basic residues; the sequence is MANIKQQKKRN. Residues 1–20 form a disordered region; the sequence is MANIKQQKKRNKTNEKRRLQ.

It belongs to the bacterial ribosomal protein bS20 family.

Functionally, binds directly to 16S ribosomal RNA. This chain is Small ribosomal subunit protein bS20, found in Aster yellows witches'-broom phytoplasma (strain AYWB).